We begin with the raw amino-acid sequence, 520 residues long: AMP-binding domain-containing enzyme iboA (520 aa).

L180–V191 is an ATP binding site. Positions D397–D447 match the FACS motif.

This sequence belongs to the ATP-dependent AMP-binding enzyme family. The cofactor is Mg(2+).

It participates in secondary metabolite biosynthesis. Its function is as follows. AMP-binding domain-containing enzyme; part of the gene cluster that mediates the biosynthesis of the psychoactive metabolites ibotenic acid and muscimol. The first committed step is glutamate hydroxylation by the 2-oxoglutarate-dependent dioxygenase iboH, and the last step is decarboxylation of ibotenic acid to muscimol by the decarboxylase iboD. The order of the intermediate reactions is somewhat ambiguous. IboA likely activates the carboxylic acid at position 5 to introduce an amide bond, and the flavin monooxygenase iboF generates the N-O bond. There are several options for the latter step. One option is that iboF directly hydroxylates the amide nitrogen formed by iboA to produce a hydroxamic acid species. Another option is that iboF hydroxylates an external N-containing compound, whose resulting N-O bond is subsequently introduced into the hydroxyglutamate scaffold. The paralogous PLP-dependent cystathionine gamma-synthase-like enzymes iboG1 and iboG2 are likely involved in substitution of the OH group at position 3 by the O-N moiety. The first cyclic intermediate is most probably tricholomic acid which is likely desaturated to ibotenic acid by the cytochrome P450 monooxygenase iboC. In Amanita muscaria (strain Koide BX008), this protein is AMP-binding domain-containing enzyme iboA.